Here is a 324-residue protein sequence, read N- to C-terminus: NADH-cytochrome b5 reductase 1 (324 aa).

A helical transmembrane segment spans residues 49–69; sequence LNIVLAFVVGLIGSVVVLLYF. The FAD-binding FR-type domain occupies 81-184; it reads TQWQQYRLME…KGPKGQMRYA (104 aa). Residues 164-179 and 190-222 contribute to the FAD site; these read GSMK…GPKG and HIGM…QIDF.

Belongs to the flavoprotein pyridine nucleotide cytochrome reductase family. As to quaternary structure, monomer. Component of the 2-(3-amino-3-carboxypropyl)histidine synthase complex composed of DPH1, DPH2, DPH3 and a NADH-dependent reductase, predominantly CBR1. FAD serves as cofactor.

Its subcellular location is the mitochondrion outer membrane. The catalysed reaction is 2 Fe(III)-[cytochrome b5] + NADH = 2 Fe(II)-[cytochrome b5] + NAD(+) + H(+). It carries out the reaction 2 Fe(3+)-[Dph3] + NADH = 2 Fe(2+)-[Dph3] + NAD(+) + H(+). It functions in the pathway protein modification; peptidyl-diphthamide biosynthesis. NADH-dependent reductase for DPH3 and cytochrome b5. Required for the first step of diphthamide biosynthesis, a post-translational modification of histidine which occurs in elongation factor 2. DPH1 and DPH2 transfer a 3-amino-3-carboxypropyl (ACP) group from S-adenosyl-L-methionine (SAM) to a histidine residue, the reaction is assisted by a reduction system comprising DPH3 and a NADH-dependent reductase, predominantly CBR1. By reducing DPH3, also involved in the formation of the tRNA wobble base modification mcm5s 2U (5-methoxycarbonylmethyl-2-thiouridine), mediated by the elongator complex. The cytochrome b5/NADH cytochrome b5 reductase electron transfer system supports the catalytic activity of several sterol biosynthetic enzymes. The sequence is that of NADH-cytochrome b5 reductase 1 (CBR1) from Mycosarcoma maydis (Corn smut fungus).